We begin with the raw amino-acid sequence, 381 residues long: E3 ubiquitin-protein ligase ATL15 (381 aa).

A signal peptide spans 1–23; it reads MVVMSRVSFYSSFLLLLLEVVVA. The helical transmembrane segment at 40–60 threads the bilayer; that stretch reads AIIMIVLVSVFFALGCISVYM. The segment at 118-160 adopts an RING-type; atypical zinc-finger fold; sequence CPVCLNEFEDDETLRLIPQCCHVFHPGCIDAWLRSQTTCPLCR.

Belongs to the RING-type zinc finger family. ATL subfamily.

Its subcellular location is the membrane. It catalyses the reaction S-ubiquitinyl-[E2 ubiquitin-conjugating enzyme]-L-cysteine + [acceptor protein]-L-lysine = [E2 ubiquitin-conjugating enzyme]-L-cysteine + N(6)-ubiquitinyl-[acceptor protein]-L-lysine.. The protein operates within protein modification; protein ubiquitination. In terms of biological role, E3 ubiquitin-protein ligase able to catalyze polyubiquitination with ubiquitin-conjugating enzyme E2 UBC8, UBC10, UBC11, UBC28 and UBC29 in vitro. The protein is E3 ubiquitin-protein ligase ATL15 (ATL15) of Arabidopsis thaliana (Mouse-ear cress).